Consider the following 128-residue polypeptide: uncharacterized protein (128 aa).

It to M.jannaschii MJ0766.

This is an uncharacterized protein from Methanocaldococcus jannaschii (strain ATCC 43067 / DSM 2661 / JAL-1 / JCM 10045 / NBRC 100440) (Methanococcus jannaschii).